A 1704-amino-acid chain; its full sequence is ABC transporter ced-7 (1704 aa).

Residues 23–43 traverse the membrane as a helical segment; that stretch reads VWTLFELIIPCLLLGPLVYLV. Asn-126 and Asn-145 each carry an N-linked (GlcNAc...) asparagine glycan. Transmembrane regions (helical) follow at residues 256–276, 306–326, and 334–354; these read AFIDFFPFIWAFVTFINVIHI, VVMAFLKFFVIFLCSIIPLTF, and AALIVTVLMYGLGAVIFGAFV. An N-linked (GlcNAc...) asparagine glycan is attached at Asn-359. Helical transmembrane passes span 362 to 382 and 389 to 409; these read NSAIKAILVAWGAMIGISYKL and ISSCFLYGLNINGAFALAVEA. Asn-421 and Asn-427 each carry an N-linked (GlcNAc...) asparagine glycan. Residues 436–456 form a helical membrane-spanning segment; that stretch reads GWALVMMIVDILWMSIGALVV. Asn-481 is a glycosylation site (N-linked (GlcNAc...) asparagine). A disordered region spans residues 511–536; sequence NPMASTSLNPPNADSDSLLEGSTEAD. Positions 512 to 525 are enriched in polar residues; sequence PMASTSLNPPNADS. In terms of domain architecture, ABC transporter 1 spans 546 to 777; it reads IIVRNLVKIW…FGTGYLLTVV (232 aa). An ATP-binding site is contributed by 580-587; it reads GHNGAGKS. N-linked (GlcNAc...) asparagine glycosylation is found at Asn-678, Asn-727, and Asn-899. 2 stretches are compositionally biased toward polar residues: residues 888 to 902 and 911 to 921; these read RQNSRISHNSRNASE and DTQSSTKSADS. Residues 888-933 form a disordered region; it reads RQNSRISHNSRNASEPSLKPAGYDTQSSTKSADSYQKLMDSQARGP. The helical transmembrane segment at 963–983 threads the bilayer; sequence LFTQVLIPIILLGLVGSLTTL. N-linked (GlcNAc...) asparagine glycosylation is found at Asn-986, Asn-1012, and Asn-1045. Transmembrane regions (helical) follow at residues 1126 to 1146, 1153 to 1173, 1176 to 1196, 1201 to 1221, 1234 to 1254, 1266 to 1286, and 1311 to 1331; these read LAPMLILIFAMVTSTFVMFLI, FAHQQFLTGISPITFYSASLI, GILYSLICLIFLFMFLAFHWM, AIVILFWFLYFFSSVPFIYAV, LLIIWQVVISGAALLAVFLIF, ILVNIFMFLLPSYAFGSAIIT, and LMGTFGVCSFALFVLLQFKFV. Residues 1379–1603 form the ABC transporter 2 domain; it reads LVIKDLTKTF…YGNNYTMTLS (225 aa). Residue 1411–1418 coordinates ATP; sequence GVNGAGKT. Residues Asn-1597 and Asn-1632 are each glycosylated (N-linked (GlcNAc...) asparagine).

The protein belongs to the ABC transporter superfamily. ABCA family. Ubiquitous in embryos. Expressed in larval germline precursors. Expression in larvae and adults is seen in amphid sheath cells, pharyngeal-intestinal valve and phasmid sheath cells. Low levels of expression are also seen in gonadal sheath cells.

Its subcellular location is the membrane. Functionally, functions in the engulfment of cell corpses during embryonic programmed cell death to translocate molecules that mediate homotypic adhesion between cell surfaces of the dying and engulfing cells. This Caenorhabditis elegans protein is ABC transporter ced-7 (ced-7).